Here is a 302-residue protein sequence, read N- to C-terminus: CASP-like protein 4A2 (302 aa).

Polar residues predominate over residues 1 to 13 (MALQAQQQATPSP). Residues 1–134 (MALQAQQQAT…APPPHAQVRS (134 aa)) are disordered. The Cytoplasmic portion of the chain corresponds to 1–154 (MALQAQQQAT…RKRRAAVMQR (154 aa)). Residues 40 to 60 (VVVASTHHAAAAARYVPPRAT) show a composition bias toward low complexity. Residues 99–129 (KTPPPAPPLPAAPPPPPAASPAPAPRAPPPH) are compositionally biased toward pro residues. The chain crosses the membrane as a helical span at residues 155–175 (AALLARAAAAGLCLAALAVLA). Over 176–197 (SDTRRGWARDSYSNYAQFRYSE) the chain is Extracellular. A helical membrane pass occupies residues 198–218 (AVNVVGFLYSVFQFVALAELM). The Cytoplasmic portion of the chain corresponds to 219-238 (RRNKHLIPHPKRDLFDFTMD). The chain crosses the membrane as a helical span at residues 239-256 (QVVAYLLISSSSSATARA). Residues 257–273 (SDLIENWGSDSFPSMAN) are Extracellular-facing. Residues 274–294 (GSIAISFVAFVVFAICSLISA) form a helical membrane-spanning segment. The Cytoplasmic segment spans residues 295-302 (YNLFRRDM).

The protein belongs to the Casparian strip membrane proteins (CASP) family. In terms of assembly, homodimer and heterodimers.

The protein resides in the cell membrane. This Zea mays (Maize) protein is CASP-like protein 4A2.